The sequence spans 147 residues: 6,7-dimethyl-8-ribityllumazine synthase (147 aa).

Residues Phe-16, 48 to 50 (TFD), and 73 to 75 (AVI) contribute to the 5-amino-6-(D-ribitylamino)uracil site. 78-79 (DT) provides a ligand contact to (2S)-2-hydroxy-3-oxobutyl phosphate. The active-site Proton donor is His-81. Residue Leu-106 participates in 5-amino-6-(D-ribitylamino)uracil binding. Arg-121 is a (2S)-2-hydroxy-3-oxobutyl phosphate binding site.

This sequence belongs to the DMRL synthase family.

The enzyme catalyses (2S)-2-hydroxy-3-oxobutyl phosphate + 5-amino-6-(D-ribitylamino)uracil = 6,7-dimethyl-8-(1-D-ribityl)lumazine + phosphate + 2 H2O + H(+). The protein operates within cofactor biosynthesis; riboflavin biosynthesis; riboflavin from 2-hydroxy-3-oxobutyl phosphate and 5-amino-6-(D-ribitylamino)uracil: step 1/2. Catalyzes the formation of 6,7-dimethyl-8-ribityllumazine by condensation of 5-amino-6-(D-ribitylamino)uracil with 3,4-dihydroxy-2-butanone 4-phosphate. This is the penultimate step in the biosynthesis of riboflavin. The chain is 6,7-dimethyl-8-ribityllumazine synthase from Aeropyrum pernix (strain ATCC 700893 / DSM 11879 / JCM 9820 / NBRC 100138 / K1).